The sequence spans 142 residues: Hemoglobin subunit alpha-A (142 aa).

The Globin domain occupies 2–142 (VLSANDKSNV…VGTVLTAKYR (141 aa)). H59 is an O2 binding site. H88 contacts heme b.

The protein belongs to the globin family. Heterotetramer of two alpha chains and two beta chains. As to expression, red blood cells.

Its function is as follows. Involved in oxygen transport from the lung to the various peripheral tissues. The sequence is that of Hemoglobin subunit alpha-A (HBAA) from Columba livia (Rock dove).